The following is a 274-amino-acid chain: Large ribosomal subunit protein uL2cz/uL2cy (274 aa).

The segment at 224-274 is disordered; it reads NPVDHPHGGGEGRAPIGRKKPATPWGYPALGRRSRKRNKYSDNLILRRRSK.

This sequence belongs to the universal ribosomal protein uL2 family. Part of the 50S ribosomal subunit.

Its subcellular location is the plastid. The protein localises to the chloroplast. The polypeptide is Large ribosomal subunit protein uL2cz/uL2cy (rpl2-A) (Morus indica (Mulberry)).